Consider the following 185-residue polypeptide: FK506-binding protein 2 (185 aa).

The signal sequence occupies residues 1–20; sequence MQGLLLSLSLLASAAVGVLA. Positions 41 to 129 constitute a PPIase FKBP-type domain; the sequence is GDKINVHYKG…VFETELVGIE (89 aa). Positions 182-185 match the Prevents secretion from ER motif; sequence HNEL.

Belongs to the FKBP-type PPIase family. FKBP2 subfamily.

It localises to the endoplasmic reticulum. The enzyme catalyses [protein]-peptidylproline (omega=180) = [protein]-peptidylproline (omega=0). With respect to regulation, inhibited by both FK506 and rapamycin. Its function is as follows. PPIases accelerate the folding of proteins. It catalyzes the cis-trans isomerization of proline imidic peptide bonds in oligopeptides. This chain is FK506-binding protein 2 (FPR2), found in Podospora anserina (Pleurage anserina).